The following is a 1153-amino-acid chain: MVPAPHTQHYSSSTMPNSSSTTAHSAPTTNGDVHAPKDHQLSSPSDTVPAPVNRKKQKRRQKQAARLAERQLANGHVSTDDATQNGSSHTNPERHHSDDGGADGPDHEQPANGDVYPKDGQDSTEAHIDSQNPQGPNGTESSQKSTGRKSKKKKGKKGRNGSHAQGDETSTPMSTPSVSMSHPLPPPLSSHLASHNILKPAKNRSIWNTSTQEERENIKTFWLELGEEERRQLVKVEKDAVLKKMKEQQRHSCSCTVCGRKRTAIEEELEVLYDAYYEELEQYANHNQGSFEKGSPMVPPPRLYQPPLRSPGQHTRTQGQFHPSRGRIHELTEDDDLEENYDEEEDDGDEPYSDEELDEEDEETRAARADFFAFGNSLTVKVADDLLKNDGKHFIDMMEQLAERRMQREEDTQYGIAAAHESLHSGHNHGPFDDEDYDDEEDEDYDSQEEEDYEEDEMDAMTEEQRMEEGRRMFQIFAARMFEQRVLTAYREKVAEQRQQKLIEELMEEETRNEQRNAKKAREAQKRKDKKRLQKQAKEEERARREAEKAAEEAAAKAEQEKKLEEQRKKREEQRKKKEAERKAQEEERARKEAEKLRRQREERERQAEAERKQREEKKRREEARRKEKEERELREKKAKEERDRKAQEQQAKKDTAKGGEEAKDQEKRDDQAKRSSQQVPVPIPTNLHHLQGLSPTVAHSPHVPSATPVLPKAPTPAKPRQPSQQDSHSSSPHSQAPSTDPSQASLSPRSMPVSQSSGVASGNSQQGQGLHAMLHQPQPSTPLSPLGRSIPPGFSSVNGIPPNPPGLSGMVARPPVGHDLPSYPSHSGPFISPFRGYPAPTGIPAPPGINGARPMPPGRGFPLEPAQGFAFHGQQIPGAFSTPQGGLPHRHSRQPSGSLERSPLENHAQPMPISRPSPIKRPSSTQQDQQKGDDRTTQRDVDDLSAHLGSSALLDDSDVSLSSNLSQSLPGATVPGTFSGPARASFGGPSLFPDPLSASGWSNNAFGSGGHHRAHTSRPVAIRLLVIQACKQLNTMSPSKGADGYHDVNLVLRHVEQLRPQNEPSISLKEMLDICDTEGNTQNGGGTFSIRKDETGEFVKFEPDNNSAASGHRGSIVPGEIGSPVPSSSLPAFGGIGTPSVLRQYSSPPMGF.

Disordered regions lie at residues 1-212, 288-364, 421-467, and 507-941; these read MVPA…TSTQ, QGSF…DEET, ESLH…EQRM, and MEEE…TQRD. The segment covering 11–30 has biased composition (low complexity); the sequence is SSSTMPNSSSTTAHSAPTTN. The span at 53–63 shows a compositional bias: basic residues; that stretch reads NRKKQKRRQKQ. Residues 64 to 73 are compositionally biased toward low complexity; the sequence is AARLAERQLA. A compositionally biased stretch (polar residues) spans 76–90; the sequence is HVSTDDATQNGSSHT. Composition is skewed to basic and acidic residues over residues 91–109 and 116–128; these read NPER…DHEQ and YPKD…EAHI. The segment covering 129–140 has biased composition (polar residues); it reads DSQNPQGPNGTE. Residues 146–160 are compositionally biased toward basic residues; it reads TGRKSKKKKGKKGRN. The span at 169 to 182 shows a compositional bias: low complexity; sequence TSTPMSTPSVSMSH. Residues 312 to 321 are compositionally biased toward polar residues; that stretch reads GQHTRTQGQF. Acidic residues-rich tracts occupy residues 332–363 and 433–462; these read TEDD…EDEE and DDED…DAMT. The stretch at 447-658 forms a coiled coil; the sequence is SQEEEDYEED…EQQAKKDTAK (212 aa). 2 stretches are compositionally biased toward basic and acidic residues: residues 507–526 and 536–674; these read MEEE…EAQK and QAKE…DQAK. Low complexity predominate over residues 721 to 739; it reads RQPSQQDSHSSSPHSQAPS. The span at 740-769 shows a compositional bias: polar residues; the sequence is TDPSQASLSPRSMPVSQSSGVASGNSQQGQ. Positions 913–925 are enriched in low complexity; it reads PISRPSPIKRPSS. Basic and acidic residues predominate over residues 931–941; the sequence is QKGDDRTTQRD.

The protein belongs to the NST1 family.

It is found in the cytoplasm. May act as a negative regulator of salt tolerance. The polypeptide is Stress response protein nst1 (nst1) (Aspergillus fumigatus (strain ATCC MYA-4609 / CBS 101355 / FGSC A1100 / Af293) (Neosartorya fumigata)).